The sequence spans 581 residues: MSKLKNLNREFISNLKSHKLITDAKRNLILSILKSTTTKREARNYLNKYQNQFDFGDLKISSSAKYEQDVSKLTKRDSQRELFVNRYLNKQNPFINIYDDETKLKKIPLRVALFKLKFLNIDPKEWRGIAETFKRLVNLGISPIVFLDYDHLPTDSFKYNELYMINQVNKVMNYLGKPEEEGNLKTTVLRSLFTVENKERGPVINSLESILIPLYQGIIPFIQPIIYNAESTFQQFINSNQLLYSLCESLLDKKDLLSVEKIVMIDPIGGIPSVERNQTSHVFINLSQEYSDIVSELYIGHIEPDQRDLHLANLNTMHEILTLASSKSGNDDTTGIITTPFIMSVNDDLINPIIYNVLTDRPIISSSLPSSNNRTPQLSTSILKKGVDVRSYDADNYARKFTLHNLIEDELVDKNRLVALLDDSFGKNLDTDSYFDRINNSLATLVIVGDYDGAAIITWEYSGTNKIAYLDKFAIAKKNQGLPGLADVIFKIILSSHPHELIWRSRKVNPVNKWYFERCVGSMSSPESQWRIFYTGDIFNRRIDKRRKRIVGSEAVNISDKLVQYSEICEGIPPSFFSSKE.

Residues 401–558 (FTLHNLIEDE…RIVGSEAVNI (158 aa)) enclose the N-acetyltransferase domain.

Belongs to the acetyltransferase family.

The protein resides in the mitochondrion. The catalysed reaction is L-glutamate + acetyl-CoA = N-acetyl-L-glutamate + CoA + H(+). It functions in the pathway amino-acid biosynthesis; L-arginine biosynthesis; N(2)-acetyl-L-ornithine from L-glutamate: step 1/4. Its function is as follows. N-acetylglutamate synthase involved in arginine biosynthesis. This Scheffersomyces stipitis (strain ATCC 58785 / CBS 6054 / NBRC 10063 / NRRL Y-11545) (Yeast) protein is Amino-acid acetyltransferase, mitochondrial (ARG2).